The primary structure comprises 141 residues: Large ribosomal subunit protein uL11c (141 aa).

Belongs to the universal ribosomal protein uL11 family. Part of the ribosomal stalk of the 50S ribosomal subunit. Interacts with L10 and the large rRNA to form the base of the stalk. L10 forms an elongated spine to which L12 dimers bind in a sequential fashion forming a multimeric L10(L12)X complex.

It localises to the plastid. The protein resides in the chloroplast. In terms of biological role, forms part of the ribosomal stalk which helps the ribosome interact with GTP-bound translation factors. This chain is Large ribosomal subunit protein uL11c, found in Cyanidium caldarium (Red alga).